A 415-amino-acid chain; its full sequence is Beta-2 adrenergic receptor (415 aa).

At 1–34 (MGQPANRSVFLLAPNGSHAPDQGDSQERSEAWVV) the chain is on the extracellular side. N-linked (GlcNAc...) asparagine glycans are attached at residues Asn6 and Asn15. The chain crosses the membrane as a helical span at residues 35-58 (GMGIVMSLIVLAIVFGNVLVITAI). Residues 59–71 (ARFERLQTVTNYF) are Cytoplasmic-facing. The helical transmembrane segment at 72–95 (ITSLACADLVMGLAVVPFGASHIL) threads the bilayer. Residues 96–106 (MKMWTFGNFWC) are Extracellular-facing. Intrachain disulfides connect Cys106/Cys191 and Cys184/Cys190. The chain crosses the membrane as a helical span at residues 107-129 (EFWTSIDVLCVTASIETLCVIAV). Residues 130 to 150 (DRYFAITSPFKYQSLLTKNKA) lie on the Cytoplasmic side of the membrane. Position 141 is a phosphotyrosine (Tyr141). The chain crosses the membrane as a helical span at residues 151–174 (RVVILMVWIVSGLTSFLPIQMHWY). The Extracellular segment spans residues 175 to 196 (RATHQEAINCYAKETCCDFFTN). A helical membrane pass occupies residues 197-220 (QAYAIASSIVSFYLPLVVMVFVYS). The Cytoplasmic segment spans residues 221-274 (RVFQVAQRQLQKIDRSEGRFHAQNLSQVEQDGRSGHGHRRSSKFCLKEHKALKT). Ser246 carries the post-translational modification Phosphoserine. Ser261 and Ser262 each carry phosphoserine; by PKA. Cys265 carries S-palmitoyl cysteine lipidation. A helical membrane pass occupies residues 275–298 (LGIIMGTFTLCWLPFFIVNIVHVI). The Extracellular portion of the chain corresponds to 299-305 (QDNLIPK). A helical membrane pass occupies residues 306–329 (EVYILLNWVGYVNSAFNPLIYCRS). The Cytoplasmic segment spans residues 330-415 (PDFRIAFQEL…RNCSTNDSLL (86 aa)). Cys341 carries S-palmitoyl cysteine lipidation. A phosphoserine; by PKA mark is found at Ser345 and Ser346. Residue Ser355 is modified to Phosphoserine; by BARK. Positions 379–415 (SELLCEDPPGTEDRQGTVPSDSVDSQGRNCSTNDSLL) are disordered. Residues Pro387 and Pro397 each carry the 4-hydroxyproline modification. The segment covering 395 to 415 (TVPSDSVDSQGRNCSTNDSLL) has biased composition (polar residues). Positions 412-415 (DSLL) match the PDZ-binding motif.

The protein belongs to the G-protein coupled receptor 1 family. Adrenergic receptor subfamily. ADRB2 sub-subfamily. In terms of assembly, binds NHERF1 and GPRASP1. Interacts with ARRB1 and ARRB2. Interacts with SRC. Interacts with USP20 and USP33. Interacts with VHL; the interaction, which is increased on hydroxylation of ADRB2, ubiquitinates ADRB2 leading to its degradation. Interacts with EGLN3; the interaction hydroxylates ADRB2 facilitating VHL-E3 ligase-mediated ubiquitination. Interacts (via PDZ-binding motif) with SNX27 (via PDZ domain); the interaction is required when endocytosed to prevent degradation in lysosomes and promote recycling to the plasma membrane. Interacts with CNIH4. Interacts with ARRDC3. Interacts with NEDD4. Interacts with MARCHF2. Post-translationally, palmitoylated; may reduce accessibility of Ser-345 and Ser-346 by anchoring Cys-341 to the plasma membrane. Agonist stimulation promotes depalmitoylation and further allows Ser-345 and Ser-346 phosphorylation. Phosphorylated by PKA and BARK upon agonist stimulation, which mediates homologous desensitization of the receptor. PKA-mediated phosphorylation seems to facilitate phosphorylation by BARK. In terms of processing, phosphorylation of Tyr-141 is induced by insulin and leads to supersensitization of the receptor. Post-translationally, polyubiquitinated. Agonist-induced ubiquitination leads to sort internalized receptors to the lysosomes for degradation. Deubiquitination by USP20 and USP33, leads to ADRB2 recycling and resensitization after prolonged agonist stimulation. USP20 and USP33 are constitutively associated and are dissociated immediately after agonist stimulation. Ubiquitination by the VHL-E3 ligase complex is oxygen-dependent. Hydroxylation by EGLN3 occurs only under normoxia and increases the interaction with VHL and the subsequent ubiquitination and degradation of ADRB2. In terms of processing, palmitoylated. Mainly palmitoylated at Cys-341. Palmitoylation may reduce accessibility of phosphorylation sites by anchoring the receptor to the plasma membrane. Agonist stimulation promotes depalmitoylation and further allows Ser-345 and Ser-346 phosphorylation. Also undergoes transient, ligand-induced palmitoylation at Cys-265 probably by ZDHHC9, ZDHHC14 and ZDHHC18 within the Golgi. Palmitoylation at Cys-265 requires phosphorylation by PKA and receptor internalization and stabilizes the receptor. Could be depalmitoylated by LYPLA1 at the plasma membrane.

It localises to the cell membrane. The protein localises to the early endosome. It is found in the golgi apparatus. In terms of biological role, beta-adrenergic receptors mediate the catecholamine-induced activation of adenylate cyclase through the action of G proteins. The beta-2-adrenergic receptor binds epinephrine with an approximately 30-fold greater affinity than it does norepinephrine. This is Beta-2 adrenergic receptor (ADRB2) from Canis lupus familiaris (Dog).